The chain runs to 208 residues: Probable DNA-3-methyladenine glycosylase (208 aa).

The protein belongs to the DNA glycosylase MPG family.

It localises to the nucleus. The catalysed reaction is Hydrolysis of alkylated DNA, releasing 3-methyladenine, 3-methylguanine, 7-methylguanine and 7-methyladenine.. Hydrolysis of the deoxyribose N-glycosidic bond to excise 3-methyladenine, and 7-methylguanine from the damaged DNA polymer formed by alkylation lesions. This chain is Probable DNA-3-methyladenine glycosylase, found in Encephalitozoon cuniculi (strain GB-M1) (Microsporidian parasite).